Reading from the N-terminus, the 2169-residue chain is Vitellogenin-A1 (2169 aa).

Positions 1 to 46 (MATDGITSRFGFNERRRTHNRNSCRILEDKMLAKLLLLALAGLTAA) are cleaved as a signal peptide. Residues N107 and N125 are each glycosylated (N-linked (GlcNAc...) asparagine). One can recognise a Vitellogenin domain in the interval 116–1008 (WMPNYEYVYN…SNDHRYPSGL (893 aa)). A sulfotyrosine mark is found at Y159 and Y163. N-linked (GlcNAc...) asparagine glycans are attached at residues N360, N391, and N435. Disordered stretches follow at residues 426 to 481 (DKKN…DKVE) and 514 to 570 (NDTS…SSSE). Positions 438–461 (SSSSSSSSSSSSSSSESSSSSSES) are enriched in low complexity. N514 carries an N-linked (GlcNAc...) asparagine glycan. Low complexity predominate over residues 517–531 (SSDSSSSDSSSSSSS). A glycan (N-linked (GlcNAc...) asparagine) is linked at N538. Residues 541 to 570 (SSYSSSSSSSSSSSSSESSSYSSSSSSSSE) are compositionally biased toward low complexity. N-linked (GlcNAc...) asparagine glycans are attached at residues N587, N763, and N781. Residues Y1067, Y1070, and Y1074 each carry the sulfotyrosine modification. 3 N-linked (GlcNAc...) asparagine glycosylation sites follow: N1140, N1233, and N1336. Residues Y1563, Y1564, and Y1570 each carry the sulfotyrosine modification. N-linked (GlcNAc...) asparagine glycans are attached at residues N1652 and N1696. Y1737, Y1806, Y1809, Y1822, Y1824, and Y1888 each carry sulfotyrosine. The VWFD domain maps to 1770–1979 (PSCSFSNDYF…SYAITGQNCT (210 aa)). Disulfide bonds link C1772–C1942 and C1794–C1978. N-linked (GlcNAc...) asparagine glycosylation is present at N1977. Positions 2026–2063 (EESSSSSSSSSSDSSSSSSSSESSSRSRSGSSSSSSSS) are enriched in low complexity. Positions 2026 to 2081 (EESSSSSSSSSSDSSSSSSSSESSSRSRSGSSSSSSSSEEQKEFHPHKQEHSMKEC) are disordered. Residues 2064-2079 (EEQKEFHPHKQEHSMK) show a composition bias toward basic and acidic residues.

In terms of processing, glycosylated, phosphorylated and sulfated. The large subunit is sulfated more extensively than the small one. Produced by the fat body, where it is cleaved in the rough endoplasmic reticulum or cis-Golgi before being secreted into hemolymph. It is then sequestered by a single class of receptor mediated endocytosis in the ovary.

Functionally, precursor of the egg-yolk proteins that are sources of nutrients during embryonic development. May supply aromatic amino acids to the cuticle of rapidly developing embryos. This chain is Vitellogenin-A1 (VGA1), found in Aedes aegypti (Yellowfever mosquito).